A 288-amino-acid chain; its full sequence is T-cell-interacting, activating receptor on myeloid cells protein 1 (288 aa).

The N-terminal stretch at 1 to 16 is a signal peptide; it reads MISRLLSLLCLRLCVG. The Extracellular segment spans residues 17–258; sequence QTDIPENGSP…EGYTVDNLIR (242 aa). Ig-like C2-type domains lie at 27-113 and 124-217; these read PKPS…HPSN and PQPS…LEIS. Cystine bridges form between cysteine 49-cysteine 97 and cysteine 146-cysteine 196. Asparagine 74 and asparagine 185 each carry an N-linked (GlcNAc...) asparagine glycan. Residues 259–279 form a helical membrane-spanning segment; the sequence is VGVAAAILLIVGGFLVEAWHS. At 280-288 the chain is on the cytoplasmic side; that stretch reads ERLSPNKPW.

In terms of assembly, interacts with Fc receptor gamma chain FCER1G. N-glycosylated. In terms of tissue distribution, expressed in lung, uterus, lymph nodes, spleen, thymus and bone marrow. Expressed in bone marrow CD11b(+)Gr-1(+) granulocyte precursors and mature neutrophils.

It is found in the cell membrane. Functionally, may act as receptor. Negatively regulates TCR-mediated CD4(+) T cell proliferation and activation, possibly by binding an unknown ligand on the T cell surface. Enhances Toll-like receptor-mediated production of pro-inflammatory cytokines by macrophages and neutrophils. The sequence is that of T-cell-interacting, activating receptor on myeloid cells protein 1 (Tarm1) from Mus musculus (Mouse).